Consider the following 492-residue polypeptide: N-succinylglutamate 5-semialdehyde dehydrogenase (492 aa).

220–225 (GSASTG) is a binding site for NAD(+). Catalysis depends on residues Glu-243 and Cys-277.

The protein belongs to the aldehyde dehydrogenase family. AstD subfamily.

It catalyses the reaction N-succinyl-L-glutamate 5-semialdehyde + NAD(+) + H2O = N-succinyl-L-glutamate + NADH + 2 H(+). Its pathway is amino-acid degradation; L-arginine degradation via AST pathway; L-glutamate and succinate from L-arginine: step 4/5. Catalyzes the NAD-dependent reduction of succinylglutamate semialdehyde into succinylglutamate. This is N-succinylglutamate 5-semialdehyde dehydrogenase from Salmonella heidelberg (strain SL476).